Reading from the N-terminus, the 462-residue chain is Cysteine--tRNA ligase (462 aa).

Cys29 lines the Zn(2+) pocket. Positions 31–41 (PTVYNHAHIGN) match the 'HIGH' region motif. Zn(2+) contacts are provided by Cys211, His236, and Glu240. The 'KMSKS' region signature appears at 269–273 (KMSKS). Lys272 contributes to the ATP binding site.

The protein belongs to the class-I aminoacyl-tRNA synthetase family. In terms of assembly, monomer. It depends on Zn(2+) as a cofactor.

The protein localises to the cytoplasm. The catalysed reaction is tRNA(Cys) + L-cysteine + ATP = L-cysteinyl-tRNA(Cys) + AMP + diphosphate. In Caulobacter sp. (strain K31), this protein is Cysteine--tRNA ligase.